We begin with the raw amino-acid sequence, 48 residues long: uncharacterized protein (48 aa).

A helical membrane pass occupies residues 18-38 (IIIKYWYIDLTITIFAFLILY).

It is found in the host membrane. This is an uncharacterized protein from Acidianus bottle-shaped virus (isolate Italy/Pozzuoli) (ABV).